We begin with the raw amino-acid sequence, 357 residues long: MGRFSNADGPGDDADEREVTPALTVGEGDIDASLRPRSLGEFIGQPRVREQLQLVLEGAKNRGGTPDHILLSGPPGLGKTSLAMIIAAELGSSLRVTSGPALERAGDLAAMLSNLIEGDVLFIDEIHRIARPAEEMLYLAMEDFRVDVVVGKGPGATSIPLEVAPFTLVGATTRSGALTGPLRDRFGFTAHMDFYEPAELERVLARSAGILGIELGAEAGAEIARRSRGTPRIANRLLRRVRDYAEVRADGVITRDIAKYALEVYDVDELGLDRLDRAVLSALTRSFGGGPVGVSTLAVAVGEEATTVEEVCEPFLVRAGMIARTPRGRVATAQAWKHLGMTPPAGAGGLGQVGLFE.

The interval 1 to 27 (MGRFSNADGPGDDADEREVTPALTVGE) is disordered. Residues 1 to 195 (MGRFSNADGP…FGFTAHMDFY (195 aa)) form a large ATPase domain (RuvB-L) region. Residues L34, R35, G76, K79, T80, S81, 142–144 (EDF), R185, Y195, and R232 contribute to the ATP site. T80 lines the Mg(2+) pocket. The interval 196-266 (EPAELERVLA…IAKYALEVYD (71 aa)) is small ATPAse domain (RuvB-S). Residues 269 to 357 (ELGLDRLDRA…GGLGQVGLFE (89 aa)) are head domain (RuvB-H). DNA-binding residues include R324 and R329.

This sequence belongs to the RuvB family. As to quaternary structure, homohexamer. Forms an RuvA(8)-RuvB(12)-Holliday junction (HJ) complex. HJ DNA is sandwiched between 2 RuvA tetramers; dsDNA enters through RuvA and exits via RuvB. An RuvB hexamer assembles on each DNA strand where it exits the tetramer. Each RuvB hexamer is contacted by two RuvA subunits (via domain III) on 2 adjacent RuvB subunits; this complex drives branch migration. In the full resolvosome a probable DNA-RuvA(4)-RuvB(12)-RuvC(2) complex forms which resolves the HJ.

The protein localises to the cytoplasm. It catalyses the reaction ATP + H2O = ADP + phosphate + H(+). Functionally, the RuvA-RuvB-RuvC complex processes Holliday junction (HJ) DNA during genetic recombination and DNA repair, while the RuvA-RuvB complex plays an important role in the rescue of blocked DNA replication forks via replication fork reversal (RFR). RuvA specifically binds to HJ cruciform DNA, conferring on it an open structure. The RuvB hexamer acts as an ATP-dependent pump, pulling dsDNA into and through the RuvAB complex. RuvB forms 2 homohexamers on either side of HJ DNA bound by 1 or 2 RuvA tetramers; 4 subunits per hexamer contact DNA at a time. Coordinated motions by a converter formed by DNA-disengaged RuvB subunits stimulates ATP hydrolysis and nucleotide exchange. Immobilization of the converter enables RuvB to convert the ATP-contained energy into a lever motion, pulling 2 nucleotides of DNA out of the RuvA tetramer per ATP hydrolyzed, thus driving DNA branch migration. The RuvB motors rotate together with the DNA substrate, which together with the progressing nucleotide cycle form the mechanistic basis for DNA recombination by continuous HJ branch migration. Branch migration allows RuvC to scan DNA until it finds its consensus sequence, where it cleaves and resolves cruciform DNA. In Mycolicibacterium gilvum (strain PYR-GCK) (Mycobacterium gilvum (strain PYR-GCK)), this protein is Holliday junction branch migration complex subunit RuvB.